A 984-amino-acid chain; its full sequence is MQEHLVVTLDGKDYLVEPGTNLLEFIKSQDTFVPSICYNESMGPIQTCDTCTVEIDGKIERSCSTVIDRPMTVNTVNNDVKDAQKEALDRILEKHMLYCTVCDYNNGDCEIHNTMDAWGLQHQTYEYKEKPYEKDYGPFYRYDPNQCILCGRCVEACQDIEVNETIRIDWDREHPRVIWDNDVPINESSCVSCGQCATVCPCNAMMEVNMEGNAGYMTDTEPGSLAAMVDLTKKAEPGYGPLFAISDSEAEMRKERIKKTKTVCTYCGVGCSFEVWTKDREILKVQPSHDSPANKIATCVKGKFSWGHINSDQRLTKPLVRKNGEFHEVEWDEALNVIADNFTSIKEKYGPDALSFISSSKATNEESYLMQKLARQVIGTNNVDNCSRYCQAPATKGLFRTVGHGGDSGSIEDLEKAAMSVLIGTNTAEAHPVIASRMKRAQKLFGQKIHVFDIRKHEMAERADRFYQPKPGTDLAWLSAVTKYIIDHDLHDKAFIEEWVEDFDEYYKSLETFTMAFAEEATGIPEAELIKFAEECAKAESVVICWAMGITQQDIGSDSSTAISNLLLVTGNYRRPSTGAYPLRGHNNVQGCSDMGSMPDKITGYQSIEADDIRAKFEKEYGVKLNPKVGKDNHEMVEGVHDGEIHSLYLYGEDTGIVDSNINFVQAAFENLDFMVVQDEFLTFTATFADVVLPASPSLEKDGTFTNTERRIQRLYQALKPLGESKPDWKIFQAIANKLGFDWNYKHPSEIMDEIARLTPLYAGVSYERLEGFNSLQWPVHPDGTDEPILYLEGFNFDNGKAKLFPLSFDNYFKQDEVYDIHVNNGRLLEHFHEGNMTYQTPMIKYKVPRAFVEISPELAEDRGIHEGAEVKLISETGEAVLQVHVTDRVKGKEIYIPLNNDAMENGDLGAINLLTNSDVDQYTDTPSYKRTSCRLEVIAKRGKSPLNPNNFRVNKKRHPQYSVQVQKKWERPDYVFPGNQVDK.

One can recognise a 2Fe-2S ferredoxin-type domain in the interval 3-79 (EHLVVTLDGK…PMTVNTVNND (77 aa)). Residues Cys-37, Cys-48, Cys-51, and Cys-63 each coordinate [2Fe-2S] cluster. Residues 79–119 (DVKDAQKEALDRILEKHMLYCTVCDYNNGDCEIHNTMDAWG) enclose the 4Fe-4S His(Cys)3-ligated-type domain. Residues His-95, Cys-99, Cys-102, Cys-109, Cys-147, Cys-150, Cys-153, Cys-157, Cys-190, Cys-193, Cys-196, Cys-200, Cys-264, Cys-267, Cys-271, and Cys-299 each coordinate [4Fe-4S] cluster. 2 consecutive 4Fe-4S ferredoxin-type domains span residues 138–165 (PFYR…VNET) and 181–211 (NDVP…VNME). The segment at 252–984 (MRKERIKKTK…YVFPGNQVDK (733 aa)) is formate dehydrogenase. A 4Fe-4S Mo/W bis-MGD-type domain is found at 257-313 (IKKTKTVCTYCGVGCSFEVWTKDREILKVQPSHDSPANKIATCVKGKFSWGHINSDQ).

In the C-terminal section; belongs to the prokaryotic molybdopterin-containing oxidoreductase family. [2Fe-2S] cluster is required as a cofactor. Requires [4Fe-4S] cluster as cofactor. It depends on Mo-bis(molybdopterin guanine dinucleotide) as a cofactor.

It carries out the reaction formate + NAD(+) = CO2 + NADH. This is Putative formate dehydrogenase SAB2186c from Staphylococcus aureus (strain bovine RF122 / ET3-1).